The primary structure comprises 417 residues: NADH-quinone oxidoreductase subunit D (417 aa).

This sequence belongs to the complex I 49 kDa subunit family. As to quaternary structure, NDH-1 is composed of 14 different subunits. Subunits NuoB, C, D, E, F, and G constitute the peripheral sector of the complex.

The protein resides in the cell inner membrane. It carries out the reaction a quinone + NADH + 5 H(+)(in) = a quinol + NAD(+) + 4 H(+)(out). NDH-1 shuttles electrons from NADH, via FMN and iron-sulfur (Fe-S) centers, to quinones in the respiratory chain. The immediate electron acceptor for the enzyme in this species is believed to be ubiquinone. Couples the redox reaction to proton translocation (for every two electrons transferred, four hydrogen ions are translocated across the cytoplasmic membrane), and thus conserves the redox energy in a proton gradient. The polypeptide is NADH-quinone oxidoreductase subunit D (Polaromonas naphthalenivorans (strain CJ2)).